The primary structure comprises 435 residues: Methylenetetrahydrofolate--tRNA-(uracil-5-)-methyltransferase TrmFO (435 aa).

9–14 provides a ligand contact to FAD; sequence GGGLAG.

Belongs to the MnmG family. TrmFO subfamily. It depends on FAD as a cofactor.

It is found in the cytoplasm. It catalyses the reaction uridine(54) in tRNA + (6R)-5,10-methylene-5,6,7,8-tetrahydrofolate + NADH + H(+) = 5-methyluridine(54) in tRNA + (6S)-5,6,7,8-tetrahydrofolate + NAD(+). It carries out the reaction uridine(54) in tRNA + (6R)-5,10-methylene-5,6,7,8-tetrahydrofolate + NADPH + H(+) = 5-methyluridine(54) in tRNA + (6S)-5,6,7,8-tetrahydrofolate + NADP(+). Its function is as follows. Catalyzes the folate-dependent formation of 5-methyl-uridine at position 54 (M-5-U54) in all tRNAs. The chain is Methylenetetrahydrofolate--tRNA-(uracil-5-)-methyltransferase TrmFO from Citrifermentans bemidjiense (strain ATCC BAA-1014 / DSM 16622 / JCM 12645 / Bem) (Geobacter bemidjiensis).